Here is a 34-residue protein sequence, read N- to C-terminus: Photosystem II reaction center protein M (34 aa).

A helical transmembrane segment spans residues Ile5–Ile25.

Belongs to the PsbM family. As to quaternary structure, PSII is composed of 1 copy each of membrane proteins PsbA, PsbB, PsbC, PsbD, PsbE, PsbF, PsbH, PsbI, PsbJ, PsbK, PsbL, PsbM, PsbT, PsbX, PsbY, PsbZ, Psb30/Ycf12, at least 3 peripheral proteins of the oxygen-evolving complex and a large number of cofactors. It forms dimeric complexes.

Its subcellular location is the plastid. The protein resides in the chloroplast thylakoid membrane. In terms of biological role, one of the components of the core complex of photosystem II (PSII). PSII is a light-driven water:plastoquinone oxidoreductase that uses light energy to abstract electrons from H(2)O, generating O(2) and a proton gradient subsequently used for ATP formation. It consists of a core antenna complex that captures photons, and an electron transfer chain that converts photonic excitation into a charge separation. This subunit is found at the monomer-monomer interface. This chain is Photosystem II reaction center protein M, found in Cycas taitungensis (Prince sago).